We begin with the raw amino-acid sequence, 470 residues long: ATP-dependent protease ATPase subunit HslU (470 aa).

ATP is bound by residues V22 and 64 to 69 (GVGKTE). A disordered region spans residues 145 to 187 (KKANNNTNSNNPLESLFGGSIPNFGQNNDDEEETPTDEVKTKR). ATP contacts are provided by D283, E348, and R420.

The protein belongs to the ClpX chaperone family. HslU subfamily. As to quaternary structure, a double ring-shaped homohexamer of HslV is capped on each side by a ring-shaped HslU homohexamer. The assembly of the HslU/HslV complex is dependent on binding of ATP.

It localises to the cytoplasm. In terms of biological role, ATPase subunit of a proteasome-like degradation complex; this subunit has chaperone activity. The binding of ATP and its subsequent hydrolysis by HslU are essential for unfolding of protein substrates subsequently hydrolyzed by HslV. HslU recognizes the N-terminal part of its protein substrates and unfolds these before they are guided to HslV for hydrolysis. This Staphylococcus saprophyticus subsp. saprophyticus (strain ATCC 15305 / DSM 20229 / NCIMB 8711 / NCTC 7292 / S-41) protein is ATP-dependent protease ATPase subunit HslU.